The primary structure comprises 258 residues: Triosephosphate isomerase (258 aa).

9 to 11 (NWK) contacts substrate. Catalysis depends on H95, which acts as the Electrophile. E167 functions as the Proton acceptor in the catalytic mechanism. Substrate is bound by residues G173 and S212.

Belongs to the triosephosphate isomerase family. As to quaternary structure, homodimer.

The protein resides in the cytoplasm. The enzyme catalyses D-glyceraldehyde 3-phosphate = dihydroxyacetone phosphate. It functions in the pathway carbohydrate biosynthesis; gluconeogenesis. It participates in carbohydrate degradation; glycolysis; D-glyceraldehyde 3-phosphate from glycerone phosphate: step 1/1. In terms of biological role, involved in the gluconeogenesis. Catalyzes stereospecifically the conversion of dihydroxyacetone phosphate (DHAP) to D-glyceraldehyde-3-phosphate (G3P). This chain is Triosephosphate isomerase, found in Blochmanniella pennsylvanica (strain BPEN).